Consider the following 435-residue polypeptide: ATP-dependent RNA helicase RhlB (435 aa).

A Q motif motif is present at residues Gln-9 to Ala-37. The region spanning Leu-40–Val-219 is the Helicase ATP-binding domain. Residue Ala-53–Thr-60 participates in ATP binding. The DEAD box motif lies at Asp-165–Asp-168. The Helicase C-terminal domain maps to Lys-243–Leu-390. The tract at residues Ala-395–Ser-435 is disordered. Basic residues predominate over residues Ala-424–Ser-435.

It belongs to the DEAD box helicase family. RhlB subfamily. As to quaternary structure, component of the RNA degradosome, which is a multiprotein complex involved in RNA processing and mRNA degradation.

Its subcellular location is the cytoplasm. The catalysed reaction is ATP + H2O = ADP + phosphate + H(+). Its function is as follows. DEAD-box RNA helicase involved in RNA degradation. Has RNA-dependent ATPase activity and unwinds double-stranded RNA. The polypeptide is ATP-dependent RNA helicase RhlB (Shewanella sediminis (strain HAW-EB3)).